The sequence spans 118 residues: Small ribosomal subunit protein uS13 (118 aa).

Residues 94–118 (GLPVRGQRTKTNARTRKGPRKPIKK) form a disordered region.

This sequence belongs to the universal ribosomal protein uS13 family. As to quaternary structure, part of the 30S ribosomal subunit. Forms a loose heterodimer with protein S19. Forms two bridges to the 50S subunit in the 70S ribosome.

Located at the top of the head of the 30S subunit, it contacts several helices of the 16S rRNA. In the 70S ribosome it contacts the 23S rRNA (bridge B1a) and protein L5 of the 50S subunit (bridge B1b), connecting the 2 subunits; these bridges are implicated in subunit movement. Contacts the tRNAs in the A and P-sites. This Klebsiella pneumoniae (strain 342) protein is Small ribosomal subunit protein uS13.